The chain runs to 461 residues: Mitochondrial distribution and morphology protein 12 (461 aa).

Residues 1 to 454 form the SMP-LTD domain; it reads MSLDLDWNLL…YPNYYTIDLP (454 aa). 2 disordered regions span residues 75 to 104 and 226 to 301; these read RRRG…VHHG and DASS…PSSA. Composition is skewed to polar residues over residues 80–97 and 272–288; these read RQTT…SPTD and RATS…QNSP.

This sequence belongs to the MDM12 family. Component of the ER-mitochondria encounter structure (ERMES) or MDM complex, composed of MMM1, MDM10, MDM12 and MDM34. An MMM1 homodimer associates with one molecule of MDM12 on each side in a pairwise head-to-tail manner, and the SMP-LTD domains of MMM1 and MDM12 generate a continuous hydrophobic tunnel for phospholipid trafficking.

The protein localises to the mitochondrion outer membrane. The protein resides in the endoplasmic reticulum membrane. In terms of biological role, component of the ERMES/MDM complex, which serves as a molecular tether to connect the endoplasmic reticulum (ER) and mitochondria. Components of this complex are involved in the control of mitochondrial shape and protein biogenesis, and function in nonvesicular lipid trafficking between the ER and mitochondria. MDM12 is required for the interaction of the ER-resident membrane protein MMM1 and the outer mitochondrial membrane-resident beta-barrel protein MDM10. The MDM12-MMM1 subcomplex functions in the major beta-barrel assembly pathway that is responsible for biogenesis of all mitochondrial outer membrane beta-barrel proteins, and acts in a late step after the SAM complex. The MDM10-MDM12-MMM1 subcomplex further acts in the TOM40-specific pathway after the action of the MDM12-MMM1 complex. Essential for establishing and maintaining the structure of mitochondria and maintenance of mtDNA nucleoids. The protein is Mitochondrial distribution and morphology protein 12 of Mycosarcoma maydis (Corn smut fungus).